The following is a 68-amino-acid chain: Inhibitor of trypsin and hageman factor (68 aa).

Ser-1 bears the N-acetylserine mark. A disulfide bond links Cys-3 and Cys-48.

This sequence belongs to the protease inhibitor I13 (potato type I serine protease inhibitor) family.

Its function is as follows. Specifically inhibits both trypsin and activated Hageman factor. This Cucurbita maxima (Pumpkin) protein is Inhibitor of trypsin and hageman factor.